The primary structure comprises 494 residues: Probable malate:quinone oxidoreductase 3 (494 aa).

This sequence belongs to the MQO family. Requires FAD as cofactor.

It carries out the reaction (S)-malate + a quinone = a quinol + oxaloacetate. It functions in the pathway carbohydrate metabolism; tricarboxylic acid cycle; oxaloacetate from (S)-malate (quinone route): step 1/1. This chain is Probable malate:quinone oxidoreductase 3, found in Staphylococcus epidermidis (strain ATCC 12228 / FDA PCI 1200).